Here is a 195-residue protein sequence, read N- to C-terminus: Nucleoid occlusion factor SlmA (195 aa).

One can recognise an HTH tetR-type domain in the interval 7–67 (TNRRAQILQA…GLIEFIEETL (61 aa)). Positions 30–49 (TTAKLAEKVGVSEAALYRHF) form a DNA-binding region, H-T-H motif. Residues 109 to 141 (DALMGEQDRLRARIAKLFERLETQLKQVLRERK) are a coiled coil.

It belongs to the nucleoid occlusion factor SlmA family. As to quaternary structure, homodimer. Interacts with FtsZ.

It localises to the cytoplasm. The protein localises to the nucleoid. In terms of biological role, required for nucleoid occlusion (NO) phenomenon, which prevents Z-ring formation and cell division over the nucleoid. Acts as a DNA-associated cell division inhibitor that binds simultaneously chromosomal DNA and FtsZ, and disrupts the assembly of FtsZ polymers. SlmA-DNA-binding sequences (SBS) are dispersed on non-Ter regions of the chromosome, preventing FtsZ polymerization at these regions. The chain is Nucleoid occlusion factor SlmA from Alteromonas mediterranea (strain DSM 17117 / CIP 110805 / LMG 28347 / Deep ecotype).